A 126-amino-acid polypeptide reads, in one-letter code: Probable S-adenosyl-L-methionine-binding protein MJ1583 (126 aa).

Residues 4–126 (LKPIGVVEQN…FSEKLDCPKI (123 aa)) form the TsaA-like domain. S-adenosyl-L-methionine is bound by residues 45 to 46 (HK), R75, and 106 to 109 (YNET).

This sequence belongs to the tRNA methyltransferase O family.

This Methanocaldococcus jannaschii (strain ATCC 43067 / DSM 2661 / JAL-1 / JCM 10045 / NBRC 100440) (Methanococcus jannaschii) protein is Probable S-adenosyl-L-methionine-binding protein MJ1583.